Here is an 86-residue protein sequence, read N- to C-terminus: MDAFDVIKTPIVSEKTMKLIEEENRLVFYVERKATKADIRAAIKELFDAEVADINTSITPKGKKKAYITLKSEYNAGEVAASLGIY.

Belongs to the universal ribosomal protein uL23 family. Part of the 50S ribosomal subunit. Contacts protein L29.

Its function is as follows. Binds to 23S rRNA. One of the proteins that surrounds the polypeptide exit tunnel on the outside of the ribosome. The protein is Large ribosomal subunit protein uL23 of Methanococcus maripaludis (strain C7 / ATCC BAA-1331).